A 155-amino-acid polypeptide reads, in one-letter code: D-aminoacyl-tRNA deacylase (155 aa).

The Gly-cisPro motif, important for rejection of L-amino acids signature appears at G137–P138.

The protein belongs to the DTD family. As to quaternary structure, homodimer.

The protein localises to the cytoplasm. The catalysed reaction is glycyl-tRNA(Ala) + H2O = tRNA(Ala) + glycine + H(+). The enzyme catalyses a D-aminoacyl-tRNA + H2O = a tRNA + a D-alpha-amino acid + H(+). Functionally, an aminoacyl-tRNA editing enzyme that deacylates mischarged D-aminoacyl-tRNAs. Also deacylates mischarged glycyl-tRNA(Ala), protecting cells against glycine mischarging by AlaRS. Acts via tRNA-based rather than protein-based catalysis; rejects L-amino acids rather than detecting D-amino acids in the active site. By recycling D-aminoacyl-tRNA to D-amino acids and free tRNA molecules, this enzyme counteracts the toxicity associated with the formation of D-aminoacyl-tRNA entities in vivo and helps enforce protein L-homochirality. This is D-aminoacyl-tRNA deacylase from Paracidovorax citrulli (strain AAC00-1) (Acidovorax citrulli).